The sequence spans 71 residues: Large ribosomal subunit protein bL31 (71 aa).

Cys16, Cys18, Cys38, and Cys41 together coordinate Zn(2+).

The protein belongs to the bacterial ribosomal protein bL31 family. Type A subfamily. As to quaternary structure, part of the 50S ribosomal subunit. Zn(2+) serves as cofactor.

Its function is as follows. Binds the 23S rRNA. The sequence is that of Large ribosomal subunit protein bL31 from Francisella tularensis subsp. novicida (strain U112).